We begin with the raw amino-acid sequence, 122 residues long: Protein YqjC (122 aa).

An N-terminal signal peptide occupies residues 1–20; it reads MKYRIALAVSLFALSAGSYA. The tract at residues 65–100 is disordered; it reads QLRADHQKKIAKQKDEVAERQQDLAEAKQKGDADKI. The span at 66–100 shows a compositional bias: basic and acidic residues; the sequence is LRADHQKKIAKQKDEVAERQQDLAEAKQKGDADKI.

The sequence is that of Protein YqjC (yqjC) from Escherichia coli (strain K12).